We begin with the raw amino-acid sequence, 225 residues long: Small ribosomal subunit protein uS5 (225 aa).

An S5 DRBM domain is found at L57 to V120.

The protein belongs to the universal ribosomal protein uS5 family. As to quaternary structure, part of the 30S ribosomal subunit. Contacts protein S4.

Its function is as follows. With S4 and S12 plays an important role in translational accuracy. This chain is Small ribosomal subunit protein uS5, found in Methanococcus vannielii (strain ATCC 35089 / DSM 1224 / JCM 13029 / OCM 148 / SB).